Consider the following 333-residue polypeptide: 4-hydroxyproline 2-epimerase (333 aa).

Cysteine 90 functions as the Proton acceptor in the catalytic mechanism. Residues 91 to 92, histidine 223, and aspartate 249 each bind substrate; that span reads GH. Cysteine 253 serves as the catalytic Proton donor. 254–255 lines the substrate pocket; the sequence is GT.

This sequence belongs to the proline racemase family.

It carries out the reaction trans-4-hydroxy-L-proline = cis-4-hydroxy-D-proline. In terms of biological role, catalyzes the epimerization of trans-4-hydroxy-L-proline (t4LHyp) to cis-4-hydroxy-D-proline (c4DHyp). May be involved in a degradation pathway of t4LHyp, which would allow S.novella to grow on t4LHyp as a sole carbon source. This chain is 4-hydroxyproline 2-epimerase, found in Ancylobacter novellus (strain ATCC 8093 / DSM 506 / JCM 20403 / CCM 1077 / IAM 12100 / NBRC 12443 / NCIMB 10456) (Starkeya novella).